Here is a 461-residue protein sequence, read N- to C-terminus: Argininosuccinate lyase (461 aa).

Belongs to the lyase 1 family. Argininosuccinate lyase subfamily.

The protein localises to the cytoplasm. It catalyses the reaction 2-(N(omega)-L-arginino)succinate = fumarate + L-arginine. Its pathway is amino-acid biosynthesis; L-arginine biosynthesis; L-arginine from L-ornithine and carbamoyl phosphate: step 3/3. This is Argininosuccinate lyase from Desulfitobacterium hafniense (strain DSM 10664 / DCB-2).